A 229-amino-acid polypeptide reads, in one-letter code: Urease accessory protein UreF (229 aa).

Belongs to the UreF family. In terms of assembly, ureD, UreF and UreG form a complex that acts as a GTP-hydrolysis-dependent molecular chaperone, activating the urease apoprotein by helping to assemble the nickel containing metallocenter of UreC. The UreE protein probably delivers the nickel.

Its subcellular location is the cytoplasm. Functionally, required for maturation of urease via the functional incorporation of the urease nickel metallocenter. The polypeptide is Urease accessory protein UreF (Alcanivorax borkumensis (strain ATCC 700651 / DSM 11573 / NCIMB 13689 / SK2)).